A 508-amino-acid chain; its full sequence is NADH-quinone oxidoreductase subunit N 1 (508 aa).

13 helical membrane-spanning segments follow: residues 2–22 (ILGP…GALL), 47–67 (ALGT…VGFV), 87–107 (FTLF…LLAG), 126–146 (FSTV…LFLG), 175–195 (FLLG…IYGA), 220–240 (ALLL…VSAV), 260–280 (FMAV…LLGA), 291–311 (AGWP…ANLI), 321–341 (MLAY…AATV), 351–371 (VMFY…TLIL), 396–416 (ALAF…AGFF), 431–453 (YTLS…RVLV), and 479–499 (LVVS…SLGI).

The protein belongs to the complex I subunit 2 family. As to quaternary structure, NDH-1 is composed of 14 different subunits. Subunits NuoA, H, J, K, L, M, N constitute the membrane sector of the complex.

It localises to the cell inner membrane. The enzyme catalyses a quinone + NADH + 5 H(+)(in) = a quinol + NAD(+) + 4 H(+)(out). NDH-1 shuttles electrons from NADH, via FMN and iron-sulfur (Fe-S) centers, to quinones in the respiratory chain. The immediate electron acceptor for the enzyme in this species is believed to be ubiquinone. Couples the redox reaction to proton translocation (for every two electrons transferred, four hydrogen ions are translocated across the cytoplasmic membrane), and thus conserves the redox energy in a proton gradient. The chain is NADH-quinone oxidoreductase subunit N 1 from Sorangium cellulosum (strain So ce56) (Polyangium cellulosum (strain So ce56)).